The primary structure comprises 282 residues: Deoxyribonuclease-1 (282 aa).

The N-terminal stretch at 1 to 22 (MRGARLTGALLALAGLLQVALS) is a signal peptide. Residue Asn-40 is glycosylated (N-linked (GlcNAc...) asparagine). Residue Glu-100 is part of the active site. Cysteines 123 and 126 form a disulfide. N-linked (GlcNAc...) asparagine glycosylation occurs at Asn-128. His-156 is an active-site residue. Cys-195 and Cys-231 are oxidised to a cystine.

The protein belongs to the DNase I family. Ca(2+) serves as cofactor. It depends on Mg(2+) as a cofactor.

It localises to the secreted. The protein resides in the zymogen granule. It is found in the nucleus envelope. It carries out the reaction Endonucleolytic cleavage to 5'-phosphodinucleotide and 5'-phosphooligonucleotide end-products.. Its function is as follows. Serum endocuclease secreted into body fluids by a wide variety of exocrine and endocrine organs. Expressed by non-hematopoietic tissues and preferentially cleaves protein-free DNA. Among other functions, seems to be involved in cell death by apoptosis. Binds specifically to G-actin and blocks actin polymerization. Together with DNASE1L3, plays a key role in degrading neutrophil extracellular traps (NETs). NETs are mainly composed of DNA fibers and are released by neutrophils to bind pathogens during inflammation. Degradation of intravascular NETs by DNASE1 and DNASE1L3 is required to prevent formation of clots that obstruct blood vessels and cause organ damage following inflammation. This Equus caballus (Horse) protein is Deoxyribonuclease-1 (DNASE1).